Reading from the N-terminus, the 501-residue chain is Glycerol kinase (501 aa).

Threonine 16 provides a ligand contact to ADP. ATP contacts are provided by threonine 16, threonine 17, and serine 18. Position 16 (threonine 16) interacts with sn-glycerol 3-phosphate. Arginine 20 is a binding site for ADP. 4 residues coordinate sn-glycerol 3-phosphate: arginine 84, glutamate 85, tyrosine 135, and aspartate 242. Positions 84, 85, 135, 242, and 243 each coordinate glycerol. Residues threonine 264 and glycine 307 each contribute to the ADP site. Residues threonine 264, glycine 307, glutamine 311, and glycine 408 each coordinate ATP. Glycine 408 is a binding site for ADP.

It belongs to the FGGY kinase family.

The catalysed reaction is glycerol + ATP = sn-glycerol 3-phosphate + ADP + H(+). It functions in the pathway polyol metabolism; glycerol degradation via glycerol kinase pathway; sn-glycerol 3-phosphate from glycerol: step 1/1. Its function is as follows. Key enzyme in the regulation of glycerol uptake and metabolism. Catalyzes the phosphorylation of glycerol to yield sn-glycerol 3-phosphate. The protein is Glycerol kinase of Saccharolobus islandicus (strain M.16.27) (Sulfolobus islandicus).